The primary structure comprises 87 residues: Toxin ICK-41 (87 aa).

Positions 1–19 (MKPIVYMLLFCAFTVVILG) are cleaved as a signal peptide. Disulfide bonds link Cys-40-Cys-54, Cys-40-Cys-77, Cys-53-Cys-66, and Cys-80-Cys-87.

The protein belongs to the neurotoxin 27 (Jztx-72) family. ICK-41 subfamily. As to expression, expressed by the venom gland.

The protein resides in the secreted. In terms of biological role, probable neurotoxin with ion channel impairing activity. The sequence is that of Toxin ICK-41 from Trittame loki (Brush-footed trapdoor spider).